Consider the following 123-residue polypeptide: MNQKQEDFSPSVKASLKSLNISFHKTRKVVNQIRGCSYEKALMILEFMPYRACKPITQLISSAASNANHNLGLKKKNLFISEAKVDEGTTIKRFQPRAQGRAYSIHKPTCHITIGMKSKNKIQ.

It belongs to the universal ribosomal protein uL22 family. As to quaternary structure, part of the 50S ribosomal subunit.

Its subcellular location is the plastid. The protein localises to the chloroplast. Its function is as follows. This protein binds specifically to 23S rRNA. The globular domain of the protein is located near the polypeptide exit tunnel on the outside of the subunit, while an extended beta-hairpin is found that lines the wall of the exit tunnel in the center of the 70S ribosome. In Chara vulgaris (Common stonewort), this protein is Large ribosomal subunit protein uL22c (rpl22).